A 37-amino-acid polypeptide reads, in one-letter code: Cytochrome b6-f complex subunit 5 (37 aa).

A helical transmembrane segment spans residues 5–25 (LLSGIVLGLVPVTITGLFVAA).

It belongs to the PetG family. The 4 large subunits of the cytochrome b6-f complex are cytochrome b6, subunit IV (17 kDa polypeptide, PetD), cytochrome f and the Rieske protein, while the 4 small subunits are PetG, PetL, PetM and PetN. The complex functions as a dimer.

It is found in the plastid. The protein resides in the chloroplast thylakoid membrane. Its function is as follows. Component of the cytochrome b6-f complex, which mediates electron transfer between photosystem II (PSII) and photosystem I (PSI), cyclic electron flow around PSI, and state transitions. PetG is required for either the stability or assembly of the cytochrome b6-f complex. The protein is Cytochrome b6-f complex subunit 5 of Emiliania huxleyi (Coccolithophore).